Reading from the N-terminus, the 187-residue chain is Adenine phosphoribosyltransferase (187 aa).

The protein belongs to the purine/pyrimidine phosphoribosyltransferase family. As to quaternary structure, homodimer.

It localises to the cytoplasm. The catalysed reaction is AMP + diphosphate = 5-phospho-alpha-D-ribose 1-diphosphate + adenine. It functions in the pathway purine metabolism; AMP biosynthesis via salvage pathway; AMP from adenine: step 1/1. Catalyzes a salvage reaction resulting in the formation of AMP, that is energically less costly than de novo synthesis. This chain is Adenine phosphoribosyltransferase, found in Yersinia pestis (strain Pestoides F).